We begin with the raw amino-acid sequence, 230 residues long: Ribosome biogenesis protein SLX9 homolog (230 aa).

Over residues 1–11 (MGKVRGLRARV) the composition is skewed to basic residues. Disordered stretches follow at residues 1 to 42 (MGKV…SAAG) and 155 to 187 (LGLEAGSRRQARSRESNKPRPSELSRMSAAQRQ). Residues 25-38 (GPAPPAPEATPPPA) show a composition bias toward pro residues. Residue T34 is modified to Phosphothreonine. A compositionally biased stretch (basic and acidic residues) spans 166-177 (RSRESNKPRPSE). Residue S203 is modified to Phosphoserine.

This sequence belongs to the SLX9 family. In terms of tissue distribution, not detected in any tested tissue.

It is found in the nucleus. Its subcellular location is the nucleolus. May be involved in ribosome biogenesis. In Homo sapiens (Human), this protein is Ribosome biogenesis protein SLX9 homolog.